The chain runs to 405 residues: Arginine biosynthesis bifunctional protein ArgJ (405 aa).

Thr-152, Lys-178, Thr-189, Glu-276, Asn-400, and Ser-405 together coordinate substrate. Thr-189 (nucleophile) is an active-site residue.

It belongs to the ArgJ family. As to quaternary structure, heterotetramer of two alpha and two beta chains.

It is found in the cytoplasm. The enzyme catalyses N(2)-acetyl-L-ornithine + L-glutamate = N-acetyl-L-glutamate + L-ornithine. It catalyses the reaction L-glutamate + acetyl-CoA = N-acetyl-L-glutamate + CoA + H(+). It participates in amino-acid biosynthesis; L-arginine biosynthesis; L-ornithine and N-acetyl-L-glutamate from L-glutamate and N(2)-acetyl-L-ornithine (cyclic): step 1/1. The protein operates within amino-acid biosynthesis; L-arginine biosynthesis; N(2)-acetyl-L-ornithine from L-glutamate: step 1/4. Its function is as follows. Catalyzes two activities which are involved in the cyclic version of arginine biosynthesis: the synthesis of N-acetylglutamate from glutamate and acetyl-CoA as the acetyl donor, and of ornithine by transacetylation between N(2)-acetylornithine and glutamate. The sequence is that of Arginine biosynthesis bifunctional protein ArgJ from Chromobacterium violaceum (strain ATCC 12472 / DSM 30191 / JCM 1249 / CCUG 213 / NBRC 12614 / NCIMB 9131 / NCTC 9757 / MK).